Here is a 224-residue protein sequence, read N- to C-terminus: ATP synthase subunit a (224 aa).

Helical transmembrane passes span 17–37, 78–98, 104–124, 136–156, 176–196, and 201–221; these read FIYM…VKMA, LVAT…VPGF, FLEF…YEGI, FLGP…VSHF, FLMV…YALL, and FLQA…AIAV.

Belongs to the ATPase A chain family. As to quaternary structure, F-type ATPases have 2 components, CF(1) - the catalytic core - and CF(0) - the membrane proton channel. CF(1) has five subunits: alpha(3), beta(3), gamma(1), delta(1), epsilon(1). CF(0) has three main subunits: a(1), b(2) and c(9-12). The alpha and beta chains form an alternating ring which encloses part of the gamma chain. CF(1) is attached to CF(0) by a central stalk formed by the gamma and epsilon chains, while a peripheral stalk is formed by the delta and b chains.

Its subcellular location is the cell inner membrane. Its function is as follows. Key component of the proton channel; it plays a direct role in the translocation of protons across the membrane. This chain is ATP synthase subunit a, found in Sulfurimonas denitrificans (strain ATCC 33889 / DSM 1251) (Thiomicrospira denitrificans (strain ATCC 33889 / DSM 1251)).